The sequence spans 363 residues: Protein CPn_1058/CP_0792/CPj1058/CpB1100 (363 aa).

Residues Met-1–Ala-27 form the signal peptide.

The protein belongs to the chlamydial CPn_1058/CT_355/TC_0634 family.

This is Protein CPn_1058/CP_0792/CPj1058/CpB1100 from Chlamydia pneumoniae (Chlamydophila pneumoniae).